A 191-amino-acid polypeptide reads, in one-letter code: Ribosome maturation factor RimM (191 aa).

The region spanning 99-172 (TDEFYQIDLI…FLVVDPVAAG (74 aa)) is the PRC barrel domain.

Belongs to the RimM family. As to quaternary structure, binds ribosomal protein uS19.

Its subcellular location is the cytoplasm. In terms of biological role, an accessory protein needed during the final step in the assembly of 30S ribosomal subunit, possibly for assembly of the head region. Essential for efficient processing of 16S rRNA. May be needed both before and after RbfA during the maturation of 16S rRNA. It has affinity for free ribosomal 30S subunits but not for 70S ribosomes. The polypeptide is Ribosome maturation factor RimM (Bartonella bacilliformis (strain ATCC 35685 / KC583 / Herrer 020/F12,63)).